The following is a 256-amino-acid chain: Pimeloyl-[acyl-carrier protein] methyl ester esterase (256 aa).

In terms of domain architecture, AB hydrolase-1 spans H15–P242. Residues W22, S82–L83, and F143–Q147 each bind substrate. Residue S82 is the Nucleophile of the active site. Catalysis depends on residues D207 and H235. H235 serves as a coordination point for substrate.

This sequence belongs to the AB hydrolase superfamily. Carboxylesterase BioH family. Monomer.

The protein localises to the cytoplasm. It carries out the reaction 6-carboxyhexanoyl-[ACP] methyl ester + H2O = 6-carboxyhexanoyl-[ACP] + methanol + H(+). It functions in the pathway cofactor biosynthesis; biotin biosynthesis. The physiological role of BioH is to remove the methyl group introduced by BioC when the pimeloyl moiety is complete. It allows to synthesize pimeloyl-ACP via the fatty acid synthetic pathway through the hydrolysis of the ester bonds of pimeloyl-ACP esters. This chain is Pimeloyl-[acyl-carrier protein] methyl ester esterase, found in Shigella dysenteriae serotype 1 (strain Sd197).